Here is a 360-residue protein sequence, read N- to C-terminus: Putative F-box protein At3g16210 (360 aa).

An F-box domain is found at 1 to 48 (MSKFLPEELAIEILVRLSMKDLARFRCVCKTWRDLINDPGFTETYRDM).

This is Putative F-box protein At3g16210 from Arabidopsis thaliana (Mouse-ear cress).